A 430-amino-acid polypeptide reads, in one-letter code: Enolase (430 aa).

Gln163 contributes to the (2R)-2-phosphoglycerate binding site. The active-site Proton donor is the Glu205. Residues Asp242, Glu285, and Asp312 each contribute to the Mg(2+) site. 4 residues coordinate (2R)-2-phosphoglycerate: Lys337, Arg366, Ser367, and Lys388. Residue Lys337 is the Proton acceptor of the active site.

This sequence belongs to the enolase family. Mg(2+) is required as a cofactor.

Its subcellular location is the cytoplasm. The protein localises to the secreted. The protein resides in the cell surface. The catalysed reaction is (2R)-2-phosphoglycerate = phosphoenolpyruvate + H2O. Its pathway is carbohydrate degradation; glycolysis; pyruvate from D-glyceraldehyde 3-phosphate: step 4/5. In terms of biological role, catalyzes the reversible conversion of 2-phosphoglycerate (2-PG) into phosphoenolpyruvate (PEP). It is essential for the degradation of carbohydrates via glycolysis. The chain is Enolase from Rubrobacter xylanophilus (strain DSM 9941 / JCM 11954 / NBRC 16129 / PRD-1).